Here is a 295-residue protein sequence, read N- to C-terminus: UDP-N-acetylenolpyruvoylglucosamine reductase (295 aa).

The 166-residue stretch at 23 to 188 (KVGGPADFLA…ISAKFALKPG (166 aa)) folds into the FAD-binding PCMH-type domain. The active site involves arginine 167. Serine 217 functions as the Proton donor in the catalytic mechanism. Residue glutamate 287 is part of the active site.

Belongs to the MurB family. FAD serves as cofactor.

It is found in the cytoplasm. It carries out the reaction UDP-N-acetyl-alpha-D-muramate + NADP(+) = UDP-N-acetyl-3-O-(1-carboxyvinyl)-alpha-D-glucosamine + NADPH + H(+). The protein operates within cell wall biogenesis; peptidoglycan biosynthesis. In terms of biological role, cell wall formation. The protein is UDP-N-acetylenolpyruvoylglucosamine reductase of Streptococcus pyogenes serotype M1.